Reading from the N-terminus, the 251-residue chain is Ell1-associated factor 1 (251 aa).

2 disordered regions span residues 110-187 (SKTV…DMEV) and 201-251 (FDQE…EDED). A compositionally biased stretch (polar residues) spans 112–123 (TVPSNAITQSDN). The span at 124 to 135 (SQISESKSTSQS) shows a compositional bias: low complexity. Positions 143–157 (RRKEKELEASKDGKI) are enriched in basic and acidic residues. Polar residues-rich tracts occupy residues 204 to 220 (EFNS…TASK) and 236 to 251 (SSAQ…EDED). The residue at position 247 (S247) is a Phosphoserine.

It belongs to the EAF family. Forms a stable heterodimer with ell1. Ell1-eaf1 complex interacts with RNA polymerase II.

It is found in the nucleus. Activates transcription elongation by RNA polymerase II and pyrophosphorolysis as a complex with ell1. Acts as a transcriptional transactivator of ell1 elongation activities. This Schizosaccharomyces pombe (strain 972 / ATCC 24843) (Fission yeast) protein is Ell1-associated factor 1 (eaf1).